A 294-amino-acid chain; its full sequence is Probable enoyl-CoA hydratase echA12 (294 aa).

It belongs to the enoyl-CoA hydratase/isomerase family.

It carries out the reaction a (3S)-3-hydroxyacyl-CoA = a (2E)-enoyl-CoA + H2O. It catalyses the reaction a 4-saturated-(3S)-3-hydroxyacyl-CoA = a (3E)-enoyl-CoA + H2O. Could possibly oxidize fatty acids using specific components. The polypeptide is Probable enoyl-CoA hydratase echA12 (echA12) (Mycobacterium leprae (strain TN)).